The chain runs to 351 residues: Photosystem II D2 protein (351 aa).

Residues 39 to 59 (CSYLALGGWLTGTTFVTSWYT) traverse the membrane as a helical segment. His-116 serves as a coordination point for chlorophyll a. A helical transmembrane segment spans residues 123–139 (GFCLRQFEIARLVGIRP). Pheophytin a-binding residues include Gln-128 and Asn-141. The helical transmembrane segment at 151-164 (VFVSVFLMYPLGQA) threads the bilayer. Position 196 (His-196) interacts with chlorophyll a. A helical transmembrane segment spans residues 206–226 (GALLCAIHGATVQNTLFEDGD). A plastoquinone is bound by residues His-213 and Phe-260. His-213 contacts Fe cation. His-267 provides a ligand contact to Fe cation. The helical transmembrane segment at 277–293 (GLWTSAFGIVGLALNLR) threads the bilayer.

The protein belongs to the reaction center PufL/M/PsbA/D family. In terms of assembly, PSII is composed of 1 copy each of membrane proteins PsbA, PsbB, PsbC, PsbD, PsbE, PsbF, PsbH, PsbI, PsbJ, PsbK, PsbL, PsbM, PsbT, PsbX, PsbY, PsbZ, Psb30/Ycf12, at least 3 peripheral proteins of the oxygen-evolving complex and a large number of cofactors. It forms dimeric complexes. The D1/D2 heterodimer binds P680, chlorophylls that are the primary electron donor of PSII, and subsequent electron acceptors. It shares a non-heme iron and each subunit binds pheophytin, quinone, additional chlorophylls, carotenoids and lipids. There is also a Cl(-1) ion associated with D1 and D2, which is required for oxygen evolution. The PSII complex binds additional chlorophylls, carotenoids and specific lipids. serves as cofactor.

Its subcellular location is the plastid. The protein localises to the chloroplast thylakoid membrane. It catalyses the reaction 2 a plastoquinone + 4 hnu + 2 H2O = 2 a plastoquinol + O2. In terms of biological role, photosystem II (PSII) is a light-driven water:plastoquinone oxidoreductase that uses light energy to abstract electrons from H(2)O, generating O(2) and a proton gradient subsequently used for ATP formation. It consists of a core antenna complex that captures photons, and an electron transfer chain that converts photonic excitation into a charge separation. The D1/D2 (PsbA/PsbD) reaction center heterodimer binds P680, the primary electron donor of PSII as well as several subsequent electron acceptors. D2 is needed for assembly of a stable PSII complex. In Gracilaria tenuistipitata var. liui (Red alga), this protein is Photosystem II D2 protein.